A 122-amino-acid polypeptide reads, in one-letter code: Large ribosomal subunit protein uL14 (122 aa).

It belongs to the universal ribosomal protein uL14 family. Part of the 50S ribosomal subunit. Forms a cluster with proteins L3 and L19. In the 70S ribosome, L14 and L19 interact and together make contacts with the 16S rRNA in bridges B5 and B8.

Functionally, binds to 23S rRNA. Forms part of two intersubunit bridges in the 70S ribosome. This is Large ribosomal subunit protein uL14 from Petrotoga mobilis (strain DSM 10674 / SJ95).